The primary structure comprises 412 residues: Burnettramic acids biosynthesis cluster protein E (412 aa).

Disordered regions lie at residues 1–66, 308–342, and 386–412; these read MAIA…KKIR, RNPT…SLAT, and SRAE…AAKG. The segment covering 36–58 has biased composition (acidic residues); sequence EDEQWALDELQDELCQEEPSDSE. Residues 395 to 404 are compositionally biased toward polar residues; that stretch reads EATTEPSVQS.

The protein operates within mycotoxin biosynthesis. Part of the gene cluster that mediates the biosynthesis of burnettramic acids, an unusual class of bolaamphiphilic pyrrolizidinediones that display potent antibacterial, antifungal, and cytotoxic activities. The first step of the biosynthesis of burnettramic acids is the hydroxylation of proline by the proline hydroxylase buaE to generate 4-hydroxyproline. The PKS-NRPS buaA and trans-enoyl reductase buaC construct the highly reduced polyketide chain, and the condensation (C) domain of buaA then catalyzes the amide bond formation with the activated 4-hydroxyproline. This is followed by the R domain releasing the nascent polyketide-peptide directly via a Dieckmann condensation to afford a tetramic acid fused to the hydroxyproline, generating the bicyclic pyrrolidinedione moiety. The cytochrome P450 monooxygenases buaD and buaG are likely responsible for the multiple hydroxylations on the polyketide chain and its terminus, although in the heterologous context, buaD does not appear to be required. Therefore, while buaG may be a multifunctional cytochrome P450 monooxygenase, it cannot be ruled out that the two secondary alcohols on the polyketide chain could have an acetate origin. Finally, the glycosyltransferase buaB transfers beta-D-mannose to the aglycone burnettramic acid A to form burnettramic acid A. Burnettramic acid B is a minor cis-pyrrolizidine epimer of burnettramic acid A and it is likely that small amounts of it form naturally in acidic environments. The role of the uncharacterized protein buaF in the biosynthesis of burnettramic acids has still to be determined. This Petromyces alliaceus (Aspergillus alliaceus) protein is Burnettramic acids biosynthesis cluster protein E.